The primary structure comprises 936 residues: Protein NNF2 (936 aa).

Residues 1 to 41 (MEEQFTNQKKVSHLQSLMNTKRSEQPTEFAKKHRFKDTLAL) are Lumenal-facing. A Glycyl lysine isopeptide (Lys-Gly) (interchain with G-Cter in ubiquitin) cross-link involves residue K10. Residues 42-62 (FLVFLSFNHFTSLCLLVSFIV) traverse the membrane as a helical segment. The Cytoplasmic portion of the chain corresponds to 63–120 (ATKCKDFLANCFIILFLSKKPSRHIGEVAHIDISTSKVTNGSSNRKSNSRFFGNSKNS). A helical membrane pass occupies residues 121 to 141 (FVIPIPVLICEILFAMLLKIY). Over 142–245 (GGDYFVKPIK…FKMLGKHSDS (104 aa)) the chain is Lumenal. The helical transmembrane segment at 246–266 (MIYYLSFHILFFSFASSLLHP) threads the bilayer. Residues 267–936 (HRQTAENKPL…NIHSLIGNSY (670 aa)) lie on the Cytoplasmic side of the membrane. Disordered regions lie at residues 297–351 (RISS…SNIL), 387–437 (GSNS…DFFS), and 512–533 (TSENSLTPTNSNTSYVSNQEKH). The span at 299–308 (SSSSSVSADS) shows a compositional bias: low complexity. Residues 325-351 (LSSSNQTIHPSQQNNSPVPLSSHSNIL) are compositionally biased toward polar residues. 2 stretches are compositionally biased toward low complexity: residues 394–405 (TTTTSTTTSPTT) and 414–428 (SLSNEISLSDSSNGN). Positions 512–529 (TSENSLTPTNSNTSYVSN) are enriched in polar residues.

It localises to the endoplasmic reticulum membrane. The chain is Protein NNF2 (NNF2) from Saccharomyces cerevisiae (strain ATCC 204508 / S288c) (Baker's yeast).